Consider the following 179-residue polypeptide: MTAEAAGRYATALFELAKSEGAAEAVEADLAALRAMLTESPELADALASPLHAVEVKAGILSALAKKAKFNVLTANAFGVAARNGRAGDLGDLARVYAALAAADRGVVTADVQTAAALTKKQTEALAASLKSAFGREIEVRTEVRPELMGGLIVKVGSRMFDSSLRSKLDGMKTAMKEA.

This sequence belongs to the ATPase delta chain family. F-type ATPases have 2 components, F(1) - the catalytic core - and F(0) - the membrane proton channel. F(1) has five subunits: alpha(3), beta(3), gamma(1), delta(1), epsilon(1). F(0) has three main subunits: a(1), b(2) and c(10-14). The alpha and beta chains form an alternating ring which encloses part of the gamma chain. F(1) is attached to F(0) by a central stalk formed by the gamma and epsilon chains, while a peripheral stalk is formed by the delta and b chains.

It localises to the cell inner membrane. F(1)F(0) ATP synthase produces ATP from ADP in the presence of a proton or sodium gradient. F-type ATPases consist of two structural domains, F(1) containing the extramembraneous catalytic core and F(0) containing the membrane proton channel, linked together by a central stalk and a peripheral stalk. During catalysis, ATP synthesis in the catalytic domain of F(1) is coupled via a rotary mechanism of the central stalk subunits to proton translocation. In terms of biological role, this protein is part of the stalk that links CF(0) to CF(1). It either transmits conformational changes from CF(0) to CF(1) or is implicated in proton conduction. The sequence is that of ATP synthase subunit delta from Maricaulis maris (strain MCS10) (Caulobacter maris).